The primary structure comprises 76 residues: MLKNLAKLDQTEMDKVNVDLAAAGVAFKERYNMPVIAEAVEREQPEHLRSWFRERLIAHRLASVNLSRLPYEPKLK.

As to quaternary structure, the DNA polymerase holoenzyme is a complex that contains 10 different types of subunits. These subunits are organized into 3 functionally essential subassemblies: the pol III core, the beta sliding clamp processivity factor and the clamp-loading complex. The pol III core (subunits alpha,epsilon and theta) contains the polymerase and the 3'-5' exonuclease proofreading activities. The polymerase is tethered to the template via the sliding clamp processivity factor. The clamp-loading complex assembles the beta processivity factor onto the primer template and plays a central role in the organization and communication at the replication fork. This complex contains delta, delta', psi and chi, and copies of either or both of two different DnaX proteins, gamma and tau. The composition of the holoenzyme is, therefore: (alpha,epsilon,theta)[2]-(gamma/tau)[3]-delta,delta', psi,chi-beta[4].

It catalyses the reaction DNA(n) + a 2'-deoxyribonucleoside 5'-triphosphate = DNA(n+1) + diphosphate. Functionally, DNA polymerase III is a complex, multichain enzyme responsible for most of the replicative synthesis in bacteria. This DNA polymerase also exhibits 3' to 5' exonuclease activity. The exact function of the theta subunit is unknown. This chain is DNA polymerase III subunit theta (holE), found in Escherichia coli O157:H7.